Here is a 339-residue protein sequence, read N- to C-terminus: MVREEVAGSTQTLQWKCVESRVDSKRLYYGRFILSPLRKGQADTVGIALRRALLGEIEGTCITRAKFGSVPHEYSTIAGIEESVQEILLNLKEIVLRSNLYGVRDASICVKGPRYITAQDIILPPSVEIVDTAQPIANLTEPIDFCIDLQIKRDRGYQTELRKNYQDGSYPIDAVSMPVRNVNYSIFSCGNGNEKHEILFLEIWTNGSLTPKEALYEASRNLIDLFLPFLHAEEEGASFEENKNRFTPPLFTFQKRLTNLKKNKKGIPLNCIFIDQLELTSRTYNCXKRXXXXTLLDLLSKTEEDLLRIDSFRMEDRKHIWDTLEKHLPIDLLKNKLSF.

The tract at residues 1–233 (MVREEVAGST…DLFLPFLHAE (233 aa)) is alpha N-terminal domain (alpha-NTD). An alpha C-terminal domain (alpha-CTD) region spans residues 264–339 (KKGIPLNCIF…IDLLKNKLSF (76 aa)).

Belongs to the RNA polymerase alpha chain family. As to quaternary structure, in plastids the minimal PEP RNA polymerase catalytic core is composed of four subunits: alpha, beta, beta', and beta''. When a (nuclear-encoded) sigma factor is associated with the core the holoenzyme is formed, which can initiate transcription.

It is found in the plastid. Its subcellular location is the chloroplast. The enzyme catalyses RNA(n) + a ribonucleoside 5'-triphosphate = RNA(n+1) + diphosphate. Its function is as follows. DNA-dependent RNA polymerase catalyzes the transcription of DNA into RNA using the four ribonucleoside triphosphates as substrates. In Crithopsis delileana, this protein is DNA-directed RNA polymerase subunit alpha.